The following is a 238-amino-acid chain: Survival of motor neuron-related-splicing factor 30 (238 aa).

In terms of domain architecture, Tudor spans S72–K132. Residues K142–K160 carry the Nuclear localization signal motif. S201 is modified (phosphoserine). N6-acetyllysine is present on K219.

It belongs to the SMN family. In terms of assembly, associates with spliceosomes. Associates with U4/U5/U6 tri-snRNP and with U2 snRNP.

The protein localises to the nucleus speckle. Its subcellular location is the nucleus. The protein resides in the cajal body. Its function is as follows. Involved in spliceosome assembly. The chain is Survival of motor neuron-related-splicing factor 30 (Smndc1) from Mus musculus (Mouse).